The sequence spans 143 residues: Spliceosomal protein DIB1 (143 aa).

Belongs to the DIM1 family. In terms of assembly, component of the 25S [U4/U6.U5] tri-snRNP.

It localises to the nucleus. Functionally, essential role in pre-mRNA splicing. Also essential for entry into mitosis (G2/M progression) as well as for chromosome segregation during mitosis. This is Spliceosomal protein DIB1 (DIB1) from Eremothecium gossypii (strain ATCC 10895 / CBS 109.51 / FGSC 9923 / NRRL Y-1056) (Yeast).